Here is a 186-residue protein sequence, read N- to C-terminus: Catechol O-methyltransferase (186 aa).

S-adenosyl-L-methionine contacts are provided by residues Val-7, Glu-29, Ser-37, Glu-55, Leu-56, 82–85, Ser-84, and Asp-106; that span reads GASQ. Asp-106 contributes to the Mg(2+) binding site. Lys-109 contacts substrate. Mg(2+) is bound by residues Asp-134 and Asn-135. Asn-135 and Glu-164 together coordinate substrate. Position 182 is a phosphoserine (Ser-182).

This sequence belongs to the class I-like SAM-binding methyltransferase superfamily. Cation-dependent O-methyltransferase family. Mg(2+) is required as a cofactor.

Its subcellular location is the cytoplasm. It localises to the cell membrane. It catalyses the reaction a catechol + S-adenosyl-L-methionine = a guaiacol + S-adenosyl-L-homocysteine + H(+). The catalysed reaction is 2-hydroxyestrone + S-adenosyl-L-methionine = 2-hydroxy-3-methoxy-estrone + S-adenosyl-L-homocysteine + H(+). The enzyme catalyses 4-hydroxyestrone + S-adenosyl-L-methionine = 4-methoxyestrone + S-adenosyl-L-homocysteine + H(+). It carries out the reaction 2-hydroxyestrone + S-adenosyl-L-methionine = 2-methoxyestrone + S-adenosyl-L-homocysteine + H(+). It catalyses the reaction 4-hydroxy-17beta-estradiol + S-adenosyl-L-methionine = 4-methoxy-17beta-estradiol + S-adenosyl-L-homocysteine + H(+). The catalysed reaction is 2-hydroxy-17beta-estradiol + S-adenosyl-L-methionine = 2-hydroxy-3-methoxy-17beta-estradiol + S-adenosyl-L-homocysteine + H(+). The enzyme catalyses 2-hydroxy-17beta-estradiol + S-adenosyl-L-methionine = 2-methoxy-17beta-estradiol + S-adenosyl-L-homocysteine + H(+). Its function is as follows. Catalyzes the O-methylation, and thereby the inactivation, of catecholamine neurotransmitters and catechol hormones. Also shortens the biological half-lives of certain neuroactive drugs, like L-DOPA, alpha-methyl DOPA and isoproterenol. The protein is Catechol O-methyltransferase (COMT) of Sus scrofa (Pig).